Consider the following 317-residue polypeptide: Ornithine carbamoyltransferase (317 aa).

Residues 54–57, Q81, R105, and 132–135 each bind carbamoyl phosphate; these read STRT and HPCQ. L-ornithine contacts are provided by residues N163, D227, and 231-232; that span reads SM. Carbamoyl phosphate-binding positions include 267-268 and R295; that span reads CL.

It belongs to the aspartate/ornithine carbamoyltransferase superfamily. OTCase family.

Its subcellular location is the cytoplasm. The enzyme catalyses carbamoyl phosphate + L-ornithine = L-citrulline + phosphate + H(+). Its pathway is amino-acid biosynthesis; L-arginine biosynthesis; L-arginine from L-ornithine and carbamoyl phosphate: step 1/3. Its function is as follows. Reversibly catalyzes the transfer of the carbamoyl group from carbamoyl phosphate (CP) to the N(epsilon) atom of ornithine (ORN) to produce L-citrulline. This is Ornithine carbamoyltransferase from Parafrankia sp. (strain EAN1pec).